The following is a 274-amino-acid chain: 2,3,4,5-tetrahydropyridine-2,6-dicarboxylate N-succinyltransferase (274 aa).

It belongs to the transferase hexapeptide repeat family.

It is found in the cytoplasm. It catalyses the reaction (S)-2,3,4,5-tetrahydrodipicolinate + succinyl-CoA + H2O = (S)-2-succinylamino-6-oxoheptanedioate + CoA. Its pathway is amino-acid biosynthesis; L-lysine biosynthesis via DAP pathway; LL-2,6-diaminopimelate from (S)-tetrahydrodipicolinate (succinylase route): step 1/3. The sequence is that of 2,3,4,5-tetrahydropyridine-2,6-dicarboxylate N-succinyltransferase from Escherichia fergusonii (strain ATCC 35469 / DSM 13698 / CCUG 18766 / IAM 14443 / JCM 21226 / LMG 7866 / NBRC 102419 / NCTC 12128 / CDC 0568-73).